The following is a 451-amino-acid chain: Transcription factor TGAL8 (451 aa).

A compositionally biased stretch (polar residues) spans 1-22; it reads MAYPSTSGMIQASSSLHGSITR. Disordered stretches follow at residues 1 to 32 and 70 to 151; these read MAYP…DMPS and FPSQ…PKTL. Basic and acidic residues predominate over residues 141–150; it reads KGPKTPDPKT. Residues 147–191 enclose the bZIP domain; it reads DPKTLRRLAQNREAARKSRLRKKAYIQQLETGRIRLAHLEQEIQF. Residues 149–169 form a basic motif region; it reads KTLRRLAQNREAARKSRLRKK. The interval 175 to 189 is leucine-zipper; the sequence is LETGRIRLAHLEQEI. The 237-residue stretch at 208 to 444 folds into the DOG1 domain; that stretch reads AALFNLEYER…RALALFWTTT (237 aa).

Belongs to the bZIP family. As to quaternary structure, interacts with NPR5/NH4, NH5.1 and NH5.2.

Its subcellular location is the nucleus. Transcriptional regulator involved in defense response. In Oryza sativa subsp. japonica (Rice), this protein is Transcription factor TGAL8.